Consider the following 353-residue polypeptide: Palmitoyltransferase SWF1 (353 aa).

Residue Met-1 is a topological domain, lumenal. A helical transmembrane segment spans residues 2 to 22 (LFTLIVCLTIISSLATFLLLF). The Cytoplasmic segment spans residues 23–61 (GDSPSFRNTPIQKLRNSLLSISRDIFQFYHWLDEKLNGQ). Residues 62 to 82 (LLKILNWLVPVGYVMVVTVCF) traverse the membrane as a helical segment. At 83-100 (QQFLTHTLPMLSSPGLFR) the chain is on the lumenal side. The helical transmembrane segment at 101–121 (LFTIYFSMVLIYASTILAAFS) threads the bilayer. Topologically, residues 122–190 (DPGRITTINL…NNCVGYYNYK (69 aa)) are cytoplasmic. The region spanning 147 to 197 (KTCSTCHIAKPARSKHCSVCNQCFLLYDHHCVWINNCVGYYNYKWFMLFLI) is the DHHC domain. Residue Cys-177 is the S-palmitoyl cysteine intermediate of the active site. Residues 191–211 (WFMLFLISNINMLGYGGWLCY) form a helical membrane-spanning segment. Residues 212 to 233 (WALTPVSWRKITSTNNANKVTG) lie on the Lumenal side of the membrane. A helical membrane pass occupies residues 234–254 (IFLILCSIFIVITTLFTFLHL). Topologically, residues 255–353 (RYIYLGVTTN…WNNLIERLKW (99 aa)) are cytoplasmic.

This sequence belongs to the DHHC palmitoyltransferase family. SWF1 subfamily.

The protein localises to the endoplasmic reticulum membrane. It catalyses the reaction L-cysteinyl-[protein] + hexadecanoyl-CoA = S-hexadecanoyl-L-cysteinyl-[protein] + CoA. Functionally, palmitoyltransferase that targets several endosomal SNAREs. Palmitoylates the SNAREs at cysteine residues close to the cytoplasmic end of their transmembrane domain. May have a role in the cellular quality control of transmembrane domain-containing proteins. The chain is Palmitoyltransferase SWF1 (SWF1) from Candida albicans (strain SC5314 / ATCC MYA-2876) (Yeast).